The chain runs to 133 residues: uncharacterized protein (133 aa).

The HIT domain maps to 3–106 (IFTKIINREL…PTRSLSDFGF (104 aa)). Positions 90–94 (HLHIH) match the Histidine triad motif motif.

This is an uncharacterized protein from Mycobacterium tuberculosis (strain ATCC 25618 / H37Rv).